A 108-amino-acid chain; its full sequence is Protein FMC1 homolog (108 aa).

It belongs to the FMC1 family.

In Caenorhabditis elegans, this protein is Protein FMC1 homolog.